The sequence spans 327 residues: 3' cyclic ADP-D-ribose synthase AaTIR (327 aa).

The segment at 10-120 (VALSFAGENR…GILKTIGYIN (111 aa)) is TIR domain. Lysine 229 is a catalytic residue.

As to quaternary structure, homodimer.

It carries out the reaction NADP(+) + H2O = ADP-D-ribose 2'-phosphate + nicotinamide + H(+). The catalysed reaction is NAD(+) = 3'cADPR + nicotinamide + H(+). In terms of biological role, NAD(+) hydrolase (NADase) that generates 3'cADPR, a cyclization variant of cyclic ADP-D-ribose (also called v2-cADPR). Also cleaves NADP(+), but does not cyclize the product. The chain is 3' cyclic ADP-D-ribose synthase AaTIR from Aquimarina amphilecti.